Here is a 92-residue protein sequence, read N- to C-terminus: DNA-directed RNA polymerase subunit omega (92 aa).

Belongs to the RNA polymerase subunit omega family. As to quaternary structure, the RNAP catalytic core consists of 2 alpha, 1 beta, 1 beta' and 1 omega subunit. When a sigma factor is associated with the core the holoenzyme is formed, which can initiate transcription.

It catalyses the reaction RNA(n) + a ribonucleoside 5'-triphosphate = RNA(n+1) + diphosphate. Functionally, promotes RNA polymerase assembly. Latches the N- and C-terminal regions of the beta' subunit thereby facilitating its interaction with the beta and alpha subunits. The chain is DNA-directed RNA polymerase subunit omega from Shewanella frigidimarina (strain NCIMB 400).